A 285-amino-acid chain; its full sequence is Putative sugar uptake protein lin0444 (285 aa).

The next 9 helical transmembrane spans lie at 2-21 (SIYL…PIIA), 31-50 (QLLG…FWIL), 55-77 (TVLS…LLQF), 111-133 (WQTV…GVVM), 146-168 (SVSF…YVVT), 172-194 (FDVT…AIGI), 207-229 (VTFN…LATA), 233-255 (VATS…ILIF), and 262-284 (LEWT…LSLL).

This sequence belongs to the GRP transporter (TC 2.A.7.5) family.

It localises to the cell membrane. This chain is Putative sugar uptake protein lin0444, found in Listeria innocua serovar 6a (strain ATCC BAA-680 / CLIP 11262).